Here is a 199-residue protein sequence, read N- to C-terminus: 5'-deoxynucleotidase YfbR (199 aa).

Substrate-binding positions include 18-19 and His-33; that span reads RW. Residues 30 to 142 enclose the HD domain; that stretch reads VSEHSLQVAM…VKQADALCAY (113 aa). 3 residues coordinate a divalent metal cation: His-33, His-68, and Asp-69. Substrate-binding positions include Asp-69, 77-80, and Asp-137; that span reads DLPT. Asp-137 contributes to the a divalent metal cation binding site.

The protein belongs to the 5DNU family. In terms of assembly, homodimer. A divalent metal cation serves as cofactor.

It localises to the cytoplasm. It catalyses the reaction a 2'-deoxyribonucleoside 5'-phosphate + H2O = a 2'-deoxyribonucleoside + phosphate. Functionally, catalyzes the strictly specific dephosphorylation of 2'-deoxyribonucleoside 5'-monophosphates. The chain is 5'-deoxynucleotidase YfbR from Shigella dysenteriae serotype 1 (strain Sd197).